Consider the following 1895-residue polypeptide: 1,3-beta-glucan synthase component GSC2 (1895 aa).

Composition is skewed to polar residues over residues M1–G16 and P25–S34. Disordered stretches follow at residues M1–N143 and A269–L292. Residues M1–R473 lie on the Extracellular side of the membrane. Residues Q65 to P78 are compositionally biased toward low complexity. 2 stretches are compositionally biased toward polar residues: residues Y79 to S107 and T115 to Y141. Residues A269–K278 show a composition bias toward basic residues. Residue K278 forms a Glycyl lysine isopeptide (Lys-Gly) (interchain with G-Cter in ubiquitin) linkage. Residues T288 and T291 each carry the phosphothreonine modification. Residue K405 forms a Glycyl lysine isopeptide (Lys-Gly) (interchain with G-Cter in ubiquitin) linkage. A helical membrane pass occupies residues I474–Y494. Topologically, residues T495–K511 are cytoplasmic. Residues W512–C532 traverse the membrane as a helical segment. The Extracellular portion of the chain corresponds to E533 to R550. Residues F551–Y571 form a helical membrane-spanning segment. Residues D572–H582 are Cytoplasmic-facing. A helical membrane pass occupies residues V583 to P603. Residues L604–L1579 lie on the Extracellular side of the membrane. Glycyl lysine isopeptide (Lys-Gly) (interchain with G-Cter in ubiquitin) cross-links involve residues K929, K934, K1558, and K1566. Residues I1580–F1600 traverse the membrane as a helical segment. At I1601–R1620 the chain is on the cytoplasmic side. Residues I1621–G1641 traverse the membrane as a helical segment. At L1642 to E1758 the chain is on the extracellular side. Residues F1759–I1779 traverse the membrane as a helical segment. At P1780–S1821 the chain is on the cytoplasmic side. The helical transmembrane segment at L1822–A1842 threads the bilayer. Residues H1843–K1895 lie on the Extracellular side of the membrane.

This sequence belongs to the glycosyltransferase 48 family. As to quaternary structure, component of the 1,3-beta-glucan synthase (GS) complex, composed of two alternate catalytic subunits FKS1 or GSC2, and a regulatory subunit RHO1. Interacts with SMK1.

It localises to the membrane. It catalyses the reaction [(1-&gt;3)-beta-D-glucosyl](n) + UDP-alpha-D-glucose = [(1-&gt;3)-beta-D-glucosyl](n+1) + UDP + H(+). Alternate catalytic subunit of the 1,3-beta-glucan synthase (GS) complex. Synthesizes 1,3-beta-glucan, a major structural component of the yeast cell wall. Required for spore wall assembly. Negative regulation of activity by SMK1 is important for spore wall deposition. Activity is positively regulated by RHO1. The protein is 1,3-beta-glucan synthase component GSC2 of Saccharomyces cerevisiae (strain ATCC 204508 / S288c) (Baker's yeast).